The chain runs to 89 residues: Large ribosomal subunit protein eL37A (89 aa).

The Zn(2+) site is built by Cys19, Cys22, Cys34, and Cys37. The segment at 19–37 adopts a C4-type zinc-finger fold; the sequence is CRRCGKRSFHIQKSTCACC.

Belongs to the eukaryotic ribosomal protein eL37 family. Component of the large ribosomal subunit (LSU). Mature yeast ribosomes consist of a small (40S) and a large (60S) subunit. The 40S small subunit contains 1 molecule of ribosomal RNA (18S rRNA) and at least 33 different proteins. The large 60S subunit contains 3 rRNA molecules (25S, 5.8S and 5S rRNA) and at least 46 different proteins. It depends on Zn(2+) as a cofactor.

It localises to the cytoplasm. In terms of biological role, component of the ribosome, a large ribonucleoprotein complex responsible for the synthesis of proteins in the cell. The small ribosomal subunit (SSU) binds messenger RNAs (mRNAs) and translates the encoded message by selecting cognate aminoacyl-transfer RNA (tRNA) molecules. The large subunit (LSU) contains the ribosomal catalytic site termed the peptidyl transferase center (PTC), which catalyzes the formation of peptide bonds, thereby polymerizing the amino acids delivered by tRNAs into a polypeptide chain. The nascent polypeptides leave the ribosome through a tunnel in the LSU and interact with protein factors that function in enzymatic processing, targeting, and the membrane insertion of nascent chains at the exit of the ribosomal tunnel. This Schizosaccharomyces pombe (strain 972 / ATCC 24843) (Fission yeast) protein is Large ribosomal subunit protein eL37A (rpl3703).